The sequence spans 271 residues: Cobalt import ATP-binding protein CbiO (271 aa).

Residues 2-236 enclose the ABC transporter domain; that stretch reads LATSDLWFRY…TEAMEHAGLT (235 aa). 34–41 lines the ATP pocket; it reads GANGCGKS.

It belongs to the ABC transporter superfamily. Cobalt importer (TC 3.A.1.18.1) family. In terms of assembly, forms an energy-coupling factor (ECF) transporter complex composed of an ATP-binding protein (A component, CbiO), a transmembrane protein (T component, CbiQ) and 2 possible substrate-capture proteins (S components, CbiM and CbiN) of unknown stoichimetry. Expression of just CbiMN in E.coli confers some cobalt uptake.

The protein localises to the cell inner membrane. The protein operates within cofactor biosynthesis; adenosylcobalamin biosynthesis. Functionally, part of the energy-coupling factor (ECF) transporter complex CbiMNOQ involved in cobalt import. The complex confers cobalt uptake upon expression in E.coli; can also transport nickel with a very low affinity. Presumably responsible for energy coupling to the transport system. This chain is Cobalt import ATP-binding protein CbiO, found in Salmonella typhimurium (strain LT2 / SGSC1412 / ATCC 700720).